Consider the following 3658-residue polypeptide: Serine/threonine-protein kinase SMG1 (3658 aa).

Disordered regions lie at residues 1 to 99 (MSRR…TYGR) and 116 to 142 (FTSV…MSYS). Over residues 24 to 33 (NDWQPRTDSA) the composition is skewed to polar residues. Composition is skewed to basic and acidic residues over residues 67–84 (QRHD…DEKG) and 127–136 (ATKDMRKSQE). Lys171 carries the post-translational modification N6-acetyllysine. The 584-residue stretch at 1281-1864 (RELQKSIEVQ…LYPAIVGTIS (584 aa)) folds into the FAT domain. Residues 1815–1850 (APWRGIIPQLFSRLNHPEVYVRQSICNLLCRVAQDS) form an HEAT repeat. The disordered stretch occupies residues 1896-1917 (ECEGGSPPASQDSNKDEPKSGL). The region spanning 2122 to 2461 (VGGTITILPT…MEREITRSLF (340 aa)) is the PI3K/PI4K catalytic domain. A G-loop region spans residues 2128–2134 (ILPTKTK). The tract at residues 2330–2338 (GLGDRHLDN) is catalytic loop. Positions 2350-2374 (HIDYNVCFEKGKSLRVPEKVPFRMT) are activation loop. The residue at position 3547 (Thr3547) is a Phosphothreonine. 2 positions are modified to phosphoserine: Ser3553 and Ser3567. Residues 3565–3576 (ATSADTPPSTIP) show a composition bias toward polar residues. The tract at residues 3565–3588 (ATSADTPPSTIPGTGKSIACSPKK) is disordered. Phosphothreonine occurs at positions 3570 and 3574. The FATC domain occupies 3626 to 3658 (RRMSVAEQVDYVIKEATNLDNLAQLYEGWTAWV).

It belongs to the PI3/PI4-kinase family. As to quaternary structure, component of the SMG1C complex composed of SMG1, SMG8 and SMG9; the recruitment of SMG8 to SMG1 N-terminus induces a large conformational change in the SMG1 C-terminal head domain containing the catalytic domain. Component of the transient SURF (SMG1-UPF1-eRF1-eRF3) complex. Part of a complex composed of SMG1, DHX34 and UPF1; within the complex DHX34 acts as a scaffolding protein to facilitate SMG1 phosphorylation of UPF1. Interacts with PRKCI. Interacts with TELO2 and TTI1. Interacts with RUVBL1 and RUVBL2. Interacts with DHX34 (via C-terminus); the interaction is RNA-independent. Mn(2+) serves as cofactor. Autophosphorylated.

Its subcellular location is the nucleus. It localises to the cytoplasm. The catalysed reaction is L-seryl-[protein] + ATP = O-phospho-L-seryl-[protein] + ADP + H(+). The enzyme catalyses L-threonyl-[protein] + ATP = O-phospho-L-threonyl-[protein] + ADP + H(+). Inhibited by caffeine, LY294002 and wortmannin. Serine/threonine protein kinase involved in both mRNA surveillance and genotoxic stress response pathways. Recognizes the substrate consensus sequence [ST]-Q. Plays a central role in nonsense-mediated decay (NMD) of mRNAs containing premature stop codons by phosphorylating UPF1/RENT1. Recruited by release factors to stalled ribosomes together with SMG8 and SMG9 (forming the SMG1C protein kinase complex), and UPF1 to form the transient SURF (SMG1-UPF1-eRF1-eRF3) complex. In EJC-dependent NMD, the SURF complex associates with the exon junction complex (EJC) through UPF2 and allows the formation of an UPF1-UPF2-UPF3 surveillance complex which is believed to activate NMD. Also acts as a genotoxic stress-activated protein kinase that displays some functional overlap with ATM. Can phosphorylate p53/TP53 and is required for optimal p53/TP53 activation after cellular exposure to genotoxic stress. Its depletion leads to spontaneous DNA damage and increased sensitivity to ionizing radiation (IR). May activate PRKCI but not PRKCZ. In Mus musculus (Mouse), this protein is Serine/threonine-protein kinase SMG1.